The sequence spans 165 residues: Endoribonuclease YbeY (165 aa).

Positions 130, 134, and 140 each coordinate Zn(2+).

The protein belongs to the endoribonuclease YbeY family. Requires Zn(2+) as cofactor.

The protein resides in the cytoplasm. In terms of biological role, single strand-specific metallo-endoribonuclease involved in late-stage 70S ribosome quality control and in maturation of the 3' terminus of the 16S rRNA. The sequence is that of Endoribonuclease YbeY from Streptococcus agalactiae serotype Ia (strain ATCC 27591 / A909 / CDC SS700).